The following is a 173-amino-acid chain: Small ribosomal subunit protein uS5 (173 aa).

The 64-residue stretch at 17 to 80 (WQERVIQIRR…ADGKKQLIEV (64 aa)) folds into the S5 DRBM domain.

The protein belongs to the universal ribosomal protein uS5 family. As to quaternary structure, part of the 30S ribosomal subunit. Contacts proteins S4 and S8.

With S4 and S12 plays an important role in translational accuracy. Functionally, located at the back of the 30S subunit body where it stabilizes the conformation of the head with respect to the body. This Gloeothece citriformis (strain PCC 7424) (Cyanothece sp. (strain PCC 7424)) protein is Small ribosomal subunit protein uS5.